Here is a 598-residue protein sequence, read N- to C-terminus: Elongation factor 4 (598 aa).

One can recognise a tr-type G domain in the interval 5 to 187 (SHIRNFSIIA…RLVATIPAPI (183 aa)). GTP-binding positions include 17–22 (DHGKST) and 134–137 (NKID).

This sequence belongs to the TRAFAC class translation factor GTPase superfamily. Classic translation factor GTPase family. LepA subfamily.

The protein resides in the cell inner membrane. The enzyme catalyses GTP + H2O = GDP + phosphate + H(+). In terms of biological role, required for accurate and efficient protein synthesis under certain stress conditions. May act as a fidelity factor of the translation reaction, by catalyzing a one-codon backward translocation of tRNAs on improperly translocated ribosomes. Back-translocation proceeds from a post-translocation (POST) complex to a pre-translocation (PRE) complex, thus giving elongation factor G a second chance to translocate the tRNAs correctly. Binds to ribosomes in a GTP-dependent manner. The polypeptide is Elongation factor 4 (Pseudomonas fluorescens (strain Pf0-1)).